Reading from the N-terminus, the 201-residue chain is Probable GTP-binding protein EngB (201 aa).

An EngB-type G domain is found at 22–195; it reads SLPEIAFCGR…MEQLEMILKY (174 aa). GTP-binding positions include 30 to 37, 57 to 61, 75 to 78, 142 to 145, and 174 to 176; these read GRSNVGKS, GKTRT, DLPG, TKLD, and YSS. Serine 37 and threonine 59 together coordinate Mg(2+).

Belongs to the TRAFAC class TrmE-Era-EngA-EngB-Septin-like GTPase superfamily. EngB GTPase family. The cofactor is Mg(2+).

Necessary for normal cell division and for the maintenance of normal septation. This Finegoldia magna (strain ATCC 29328 / DSM 20472 / WAL 2508) (Peptostreptococcus magnus) protein is Probable GTP-binding protein EngB.